The sequence spans 94 residues: Large ribosomal subunit protein bL27 (94 aa).

A propeptide spanning residues 1–9 is cleaved from the precursor; the sequence is MLRLDLQFF.

Belongs to the bacterial ribosomal protein bL27 family. Part of the 50S ribosomal subunit. The N-terminus is cleaved by ribosomal processing cysteine protease Prp.

In terms of biological role, plays a role in sporulation at high temperatures. This Bacillus subtilis (strain 168) protein is Large ribosomal subunit protein bL27 (rpmA).